The sequence spans 156 residues: 3-dehydroquinate dehydratase (156 aa).

Tyr24 serves as the catalytic Proton acceptor. Substrate contacts are provided by Asn76, His82, and Asp89. The active-site Proton donor is His102. Substrate contacts are provided by residues 103–104 (IS) and Arg113.

This sequence belongs to the type-II 3-dehydroquinase family. As to quaternary structure, homododecamer.

It carries out the reaction 3-dehydroquinate = 3-dehydroshikimate + H2O. It functions in the pathway metabolic intermediate biosynthesis; chorismate biosynthesis; chorismate from D-erythrose 4-phosphate and phosphoenolpyruvate: step 3/7. Functionally, catalyzes a trans-dehydration via an enolate intermediate. The protein is 3-dehydroquinate dehydratase of Nitrobacter winogradskyi (strain ATCC 25391 / DSM 10237 / CIP 104748 / NCIMB 11846 / Nb-255).